The following is a 694-amino-acid chain: MVSVEGRAMSFQSIIHLSLDSPVHAVCVLGTEICLDLSGCAPQKCQCFTIHGSGRVLIDVANTVISEKEDATIWWPLSDPTYATVKMTSPSPSVDADKVSVTYYGPNEDAPVGTAVLYLTGIEVSLEVDIYRNGQVEMSSDKQAKKKWIWGPSGWGAILLVNCNPADVGQQLEDKKTKKVIFSEEITNLSQMTLNVQGPSCILKKYRLVLHTSKEESKKARVYWPQKDNSSTFELVLGPDQHAYTLALLGNHLKETFYVEAIAFPSAEFSGLISYSVSLVEESQDPSIPETVLYKDTVVFRVAPCVFIPCTQVPLEVYLCRELQLQGFVDTVTKLSEKSNSQVASVYEDPNRLGRWLQDEMAFCYTQAPHKTTSLILDTPQAADLDEFPMKYSLSPGIGYMIQDTEDHKVASMDSIGNLMVSPPVKVQGKEYPLGRVLIGSSFYPSAEGRAMSKTLRDFLYAQQVQAPVELYSDWLMTGHVDEFMCFIPTDDKNEGKKGFLLLLASPSACYKLFREKQKEGYGDALLFDELRADQLLSNGREAKTIDQLLADESLKKQNEYVEKCIHLNRDILKTELGLVEQDIIEIPQLFCLEKLTNIPSDQQPKRSFARPYFPDLLRMIVMGKNLGIPKPFGPQIKGTCCLEEKICCLLEPLGFKCTFINDFDCYLTEVGDICACANIRRVPFAFKWWKMVP.

Ser10 and Ser446 each carry phosphoserine.

This sequence belongs to the protein arginine deiminase family. In terms of assembly, homodimers. Associates with alpha-tubulin. Post-translationally, phosphorylation at Ser-10, possibly by RSK-type kinases, and Ser-446 creates binding sites for 14-3-3 proteins. As to expression, highly expressed in oocytes and weakly expressed in other somatic tissues.

The protein localises to the cytoplasm. The protein resides in the cytoplasmic vesicle. It is found in the secretory vesicle. It localises to the cortical granule. Its subcellular location is the nucleus. Functionally, structural constituent of cytoplasmic lattices, which plays a key role in early embryonic development. Cytoplasmic lattices consist in fibrous structures found in the cytoplasm of oocytes and preimplantation embryos. They are required to store maternal proteins critical for embryonic development, such as ribosomal proteins and proteins that control epigenetic reprogramming of the preimplantation embryo, and prevent their degradation or activation. In contrast to other members of the family, does not show protein-arginine deiminase activity due to its inability to bind Ca(2+). In Homo sapiens (Human), this protein is Inactive protein-arginine deiminase type-6.